The primary structure comprises 78 residues: Apolipoprotein C-I (78 aa).

Residues 1–26 (MRLILCLPVLVVVLLMVLEGPAPAQG) form the signal peptide.

The protein belongs to the apolipoprotein C1 family.

The protein localises to the secreted. Inhibitor of lipoprotein binding to the low density lipoprotein (LDL) receptor, LDL receptor-related protein, and very low density lipoprotein (VLDL) receptor. Associates with high density lipoproteins (HDL) and the triacylglycerol-rich lipoproteins in the plasma and makes up about 10% of the protein of the VLDL and 2% of that of HDL. Appears to interfere directly with fatty acid uptake and is also the major plasma inhibitor of cholesteryl ester transfer protein (CETP). Binds free fatty acids and reduces their intracellular esterification. Modulates the interaction of APOE with beta-migrating VLDL and inhibits binding of beta-VLDL to the LDL receptor-related protein. This chain is Apolipoprotein C-I (APOC1), found in Acinonyx jubatus (Cheetah).